The following is a 171-amino-acid chain: Glycine cleavage system H protein 4 (171 aa).

The Lipoyl-binding domain occupies 30 to 112 (FAEVGITDYA…YEAGWIAVIE (83 aa)). N6-lipoyllysine is present on K71. Residues 139–171 (EKEEEVEVKEEELIETESIEELSEEELGYEENK) are disordered.

Belongs to the GcvH family. The glycine cleavage system is composed of four proteins: P, T, L and H. (R)-lipoate serves as cofactor.

Its function is as follows. The glycine cleavage system catalyzes the degradation of glycine. The H protein shuttles the methylamine group of glycine from the P protein to the T protein. The polypeptide is Glycine cleavage system H protein 4 (Aquifex aeolicus (strain VF5)).